Here is a 213-residue protein sequence, read N- to C-terminus: ATP phosphoribosyltransferase (213 aa).

This sequence belongs to the ATP phosphoribosyltransferase family. Short subfamily. Heteromultimer composed of HisG and HisZ subunits.

It localises to the cytoplasm. The catalysed reaction is 1-(5-phospho-beta-D-ribosyl)-ATP + diphosphate = 5-phospho-alpha-D-ribose 1-diphosphate + ATP. It functions in the pathway amino-acid biosynthesis; L-histidine biosynthesis; L-histidine from 5-phospho-alpha-D-ribose 1-diphosphate: step 1/9. In terms of biological role, catalyzes the condensation of ATP and 5-phosphoribose 1-diphosphate to form N'-(5'-phosphoribosyl)-ATP (PR-ATP). Has a crucial role in the pathway because the rate of histidine biosynthesis seems to be controlled primarily by regulation of HisG enzymatic activity. The polypeptide is ATP phosphoribosyltransferase (Saccharophagus degradans (strain 2-40 / ATCC 43961 / DSM 17024)).